The primary structure comprises 332 residues: Adenosine deaminase (332 aa).

Zn(2+) is bound by residues H12 and H14. Substrate is bound by residues H14, D16, and G170. H197 is a binding site for Zn(2+). The Proton donor role is filled by E200. Position 278 (D278) interacts with Zn(2+). D279 contacts substrate.

Belongs to the metallo-dependent hydrolases superfamily. Adenosine and AMP deaminases family. Adenosine deaminase subfamily. Requires Zn(2+) as cofactor.

It catalyses the reaction adenosine + H2O + H(+) = inosine + NH4(+). The catalysed reaction is 2'-deoxyadenosine + H2O + H(+) = 2'-deoxyinosine + NH4(+). Catalyzes the hydrolytic deamination of adenosine and 2-deoxyadenosine. The protein is Adenosine deaminase of Serratia proteamaculans (strain 568).